Reading from the N-terminus, the 738-residue chain is NAD(P)H-quinone oxidoreductase subunit 5, chloroplastic (738 aa).

The next 17 helical transmembrane spans lie at 9–29 (WIIP…LLLF), 39–59 (IWAF…VILS), 89–109 (IDPL…MVLI), 125–145 (FAYM…SNLI), 147–167 (IYIF…FWFT), 185–205 (GDFS…SFEF), 224–244 (FFLT…SAQF), 258–278 (TPIS…FLVA), 280–300 (LFPL…VGII), 327–347 (LGYI…FHLI), 396–416 (TSFL…CFWS), 425–445 (WLYS…TAFY), 544–564 (MLFP…IGIL), 600–620 (FLIN…IALF), 667–687 (IFYA…TYFF), 694–714 (GIVN…KYVG), and 718–738 (ISSY…ICLN).

Belongs to the complex I subunit 5 family. As to quaternary structure, NDH is composed of at least 16 different subunits, 5 of which are encoded in the nucleus.

Its subcellular location is the plastid. It is found in the chloroplast thylakoid membrane. The catalysed reaction is a plastoquinone + NADH + (n+1) H(+)(in) = a plastoquinol + NAD(+) + n H(+)(out). The enzyme catalyses a plastoquinone + NADPH + (n+1) H(+)(in) = a plastoquinol + NADP(+) + n H(+)(out). Functionally, NDH shuttles electrons from NAD(P)H:plastoquinone, via FMN and iron-sulfur (Fe-S) centers, to quinones in the photosynthetic chain and possibly in a chloroplast respiratory chain. The immediate electron acceptor for the enzyme in this species is believed to be plastoquinone. Couples the redox reaction to proton translocation, and thus conserves the redox energy in a proton gradient. This chain is NAD(P)H-quinone oxidoreductase subunit 5, chloroplastic (ndhF), found in Ranunculus macranthus (Large buttercup).